We begin with the raw amino-acid sequence, 397 residues long: Acetate kinase (397 aa).

Asn-7 lines the Mg(2+) pocket. Lys-14 is an ATP binding site. Residue Arg-88 coordinates substrate. The active-site Proton donor/acceptor is Asp-145. ATP contacts are provided by residues 205-209, 279-281, and 326-330; these read HLGNG, DMR, and GIGEN. Glu-380 contributes to the Mg(2+) binding site.

The protein belongs to the acetokinase family. Homodimer. Mg(2+) is required as a cofactor. Requires Mn(2+) as cofactor.

The protein resides in the cytoplasm. The enzyme catalyses acetate + ATP = acetyl phosphate + ADP. Its pathway is metabolic intermediate biosynthesis; acetyl-CoA biosynthesis; acetyl-CoA from acetate: step 1/2. Its function is as follows. Catalyzes the formation of acetyl phosphate from acetate and ATP. Can also catalyze the reverse reaction. This Campylobacter concisus (strain 13826) protein is Acetate kinase.